The primary structure comprises 184 residues: Cyclin-dependent kinase inhibitor 1 (184 aa).

The span at isoleucine 85–threonine 98 shows a compositional bias: low complexity. A disordered region spans residues isoleucine 85–tyrosine 184.

The protein belongs to the CDI family. As to quaternary structure, interacts with cyd-1; the interaction is direct. In terms of tissue distribution, in embryos, expression is first seen in pharyngeal primordium and later in all differentiating cells. Post embryonic expression corresponds to developmental patterns of cell cycle progression in many tissues including sex myoblasts, distal tip cells, vulval cells, seam cells, neurons, intestine cells and hypodermal cells.

It is found in the nucleus. Functionally, negative cell-cycle regulator that functions at the G1-to-S-phase transition. Required for suspension of the cell cycle in dauer larvae and starved L1 larvae. In vulval precursor cells (VPCs), a pathway of heterochronic genes acts via cki-1 to maintain VPCs in G1 during the L2 larval stage. Cul-2 may function in ubiquitin-mediated degradation by targeting cki-1 for degradation. Involved in distal tip cell development by repressing and modulating cye-1/cdk-2 activity levels in Z1.aa/Z4.pp and in Z1.ap/Z4.pa. The chain is Cyclin-dependent kinase inhibitor 1 from Caenorhabditis elegans.